Here is a 52-residue protein sequence, read N- to C-terminus: Large ribosomal subunit protein eL39 (52 aa).

The protein belongs to the eukaryotic ribosomal protein eL39 family.

This is Large ribosomal subunit protein eL39 (RPL39) from Tetrahymena thermophila (strain SB210).